The sequence spans 248 residues: 7-cyano-7-deazaguanine synthase (248 aa).

22-32 (LSGGLDSTTCL) contacts ATP. The Zn(2+) site is built by C216, C225, C228, and C231.

This sequence belongs to the QueC family. It depends on Zn(2+) as a cofactor.

The catalysed reaction is 7-carboxy-7-deazaguanine + NH4(+) + ATP = 7-cyano-7-deazaguanine + ADP + phosphate + H2O + H(+). The protein operates within purine metabolism; 7-cyano-7-deazaguanine biosynthesis. In terms of biological role, catalyzes the ATP-dependent conversion of 7-carboxy-7-deazaguanine (CDG) to 7-cyano-7-deazaguanine (preQ(0)). The chain is 7-cyano-7-deazaguanine synthase from Leptospira biflexa serovar Patoc (strain Patoc 1 / Ames).